The sequence spans 371 residues: Protein-glutamate methylesterase/protein-glutamine glutaminase 3 (371 aa).

Residues 5–120 (RVVVIDDSAY…SEEILTIRED (116 aa)) form the Response regulatory domain. At D56 the chain carries 4-aspartylphosphate. The CheB-type methylesterase domain maps to 174–362 (PAGRLEVVAI…LDRMSREIIQ (189 aa)). Catalysis depends on residues S186, H213, and D309.

This sequence belongs to the CheB family. Phosphorylated by CheA. Phosphorylation of the N-terminal regulatory domain activates the methylesterase activity.

It is found in the cytoplasm. It carries out the reaction [protein]-L-glutamate 5-O-methyl ester + H2O = L-glutamyl-[protein] + methanol + H(+). It catalyses the reaction L-glutaminyl-[protein] + H2O = L-glutamyl-[protein] + NH4(+). Functionally, involved in chemotaxis. Part of a chemotaxis signal transduction system that modulates chemotaxis in response to various stimuli. Catalyzes the demethylation of specific methylglutamate residues introduced into the chemoreceptors (methyl-accepting chemotaxis proteins or MCP) by CheR. Also mediates the irreversible deamidation of specific glutamine residues to glutamic acid. The polypeptide is Protein-glutamate methylesterase/protein-glutamine glutaminase 3 (Geobacter sulfurreducens (strain ATCC 51573 / DSM 12127 / PCA)).